We begin with the raw amino-acid sequence, 342 residues long: 4-hydroxy-3-methylbut-2-enyl diphosphate reductase (342 aa).

Cysteine 47 serves as a coordination point for [4Fe-4S] cluster. (2E)-4-hydroxy-3-methylbut-2-enyl diphosphate contacts are provided by histidine 78 and histidine 111. Dimethylallyl diphosphate-binding residues include histidine 78 and histidine 111. Residues histidine 78 and histidine 111 each contribute to the isopentenyl diphosphate site. [4Fe-4S] cluster is bound at residue cysteine 133. Histidine 161 provides a ligand contact to (2E)-4-hydroxy-3-methylbut-2-enyl diphosphate. Dimethylallyl diphosphate is bound at residue histidine 161. Residue histidine 161 coordinates isopentenyl diphosphate. Glutamate 163 functions as the Proton donor in the catalytic mechanism. Threonine 201 is a binding site for (2E)-4-hydroxy-3-methylbut-2-enyl diphosphate. Cysteine 231 lines the [4Fe-4S] cluster pocket. (2E)-4-hydroxy-3-methylbut-2-enyl diphosphate-binding residues include serine 259, serine 260, asparagine 261, and serine 303. Serine 259, serine 260, asparagine 261, and serine 303 together coordinate dimethylallyl diphosphate. Isopentenyl diphosphate is bound by residues serine 259, serine 260, asparagine 261, and serine 303.

This sequence belongs to the IspH family. [4Fe-4S] cluster is required as a cofactor.

The enzyme catalyses isopentenyl diphosphate + 2 oxidized [2Fe-2S]-[ferredoxin] + H2O = (2E)-4-hydroxy-3-methylbut-2-enyl diphosphate + 2 reduced [2Fe-2S]-[ferredoxin] + 2 H(+). It catalyses the reaction dimethylallyl diphosphate + 2 oxidized [2Fe-2S]-[ferredoxin] + H2O = (2E)-4-hydroxy-3-methylbut-2-enyl diphosphate + 2 reduced [2Fe-2S]-[ferredoxin] + 2 H(+). It participates in isoprenoid biosynthesis; dimethylallyl diphosphate biosynthesis; dimethylallyl diphosphate from (2E)-4-hydroxy-3-methylbutenyl diphosphate: step 1/1. Its pathway is isoprenoid biosynthesis; isopentenyl diphosphate biosynthesis via DXP pathway; isopentenyl diphosphate from 1-deoxy-D-xylulose 5-phosphate: step 6/6. In terms of biological role, catalyzes the conversion of 1-hydroxy-2-methyl-2-(E)-butenyl 4-diphosphate (HMBPP) into a mixture of isopentenyl diphosphate (IPP) and dimethylallyl diphosphate (DMAPP). Acts in the terminal step of the DOXP/MEP pathway for isoprenoid precursor biosynthesis. The protein is 4-hydroxy-3-methylbut-2-enyl diphosphate reductase of Anaplasma marginale (strain St. Maries).